Reading from the N-terminus, the 260-residue chain is Global transcriptional regulator CodY (260 aa).

Residues 1–159 (MPNLLEKTRK…SSTVVGIQLL (159 aa)) form a GAF domain region. The H-T-H motif DNA-binding region spans 207 to 226 (ASVIADRIGITRSVIVNALR).

This sequence belongs to the CodY family.

The protein localises to the cytoplasm. DNA-binding global transcriptional regulator which is involved in the adaptive response to starvation and acts by directly or indirectly controlling the expression of numerous genes in response to nutrient availability. During rapid exponential growth, CodY is highly active and represses genes whose products allow adaptation to nutrient depletion. This is Global transcriptional regulator CodY from Streptococcus pyogenes serotype M3 (strain SSI-1).